Here is a 582-residue protein sequence, read N- to C-terminus: MAFMEKPPAGKVLLDDTVPLTAAVEASQSLQSHTEYIIRVQRGISAENSWQIVRRYSDFDLLNNSLQITGLSLPLPPKKLIGNMDREFIAERQRGLQNYLNVIMANHVLSNCELLKKFLDPNNYSANYTEIALQQVSMFFRSEPKWEVVEPLKDIGWRIRKKYFLMKIKNQPKERLVLSWADLGPDKYLSDKDFQCLIKLLPSCVHPYIYRVTFATASESSALLIRAFNEKGTLKDLIYKAKPKDPFLKKYCNPKKTQGLELQQIKTYGRQILEALKFLHDKGFPYGHLHAANVMLDGNTCRLLDLENSLLGLPSFYRSYFTQFRKINTLESVDVHCFGHLLYEMTYGRPPDSVPVDSFPPASSLAVVAVLESTLSCEACKNGMPTVSRLLQMPLFSDVLLTTSEKPQFKIPTKLKEALRIAKECIEKRLTEEQKQIHQHRRLTRAQSHHGSEEERKRRKILARKKSKRSAVENSEEQPVKHSNSNNSAGSGASSPLTSPSSPTPPSTAGLSSALPPPPPPPPPPPPPAGPSPTSATEMPAPFLPQPVNGVNRGALLSSIQNFQKGTLRKAQTCDHSAPKIG.

Positions 14 to 126 (LDDTVPLTAA…KFLDPNNYSA (113 aa)) constitute a PX domain. The region spanning 88–481 (FIAERQRGLQ…VENSEEQPVK (394 aa)) is the Protein kinase domain. Residues 433-550 (EQKQIHQHRR…APFLPQPVNG (118 aa)) are disordered. 2 stretches are compositionally biased toward basic residues: residues 437–448 (IHQHRRLTRAQS) and 457–469 (KRRK…KSKR). Low complexity predominate over residues 483–514 (SNSNNSAGSGASSPLTSPSSPTPPSTAGLSSA). The segment covering 515 to 531 (LPPPPPPPPPPPPPAGP) has biased composition (pro residues). Positions 548 to 567 (VNGVNRGALLSSIQNFQKGT) constitute a WH2 domain.

This sequence belongs to the protein kinase superfamily. In terms of tissue distribution, isoform 1 is present in all tissues examined. Isoform 2 is found in all tissues except skeletal muscle and very low levels in spleen. Both isoforms are widely expressed throughout the nervous system however levels of isoform 2 are higher in purified hippocampal and cortical neurons whereas glial cells express more isoform 1 than isoform 2.

The protein localises to the cytoplasm. It is found in the cell membrane. Functionally, binds to and modulates brain Na,K-ATPase subunits ATP1B1 and ATP1B3 and may thereby participate in the regulation of electrical excitability and synaptic transmission. May not display kinase activity. This Mus musculus (Mouse) protein is PX domain-containing protein kinase-like protein.